The following is a 631-amino-acid chain: Chaperone protein DnaK (631 aa).

Thr-175 is modified (phosphothreonine; by autocatalysis). Residues 586 to 631 form a disordered region; sequence GAEGAAAGAGAAGAAGAGASAGSASGSDDDTVEAEVVDDDDDKDNK. Low complexity predominate over residues 602–611; that stretch reads AGASAGSASG. Residues 612–631 are compositionally biased toward acidic residues; the sequence is SDDDTVEAEVVDDDDDKDNK.

It belongs to the heat shock protein 70 family.

In terms of biological role, acts as a chaperone. The protein is Chaperone protein DnaK of Bifidobacterium longum subsp. infantis (strain ATCC 15697 / DSM 20088 / JCM 1222 / NCTC 11817 / S12).